The primary structure comprises 328 residues: Delta-aminolevulinic acid dehydratase (328 aa).

The active-site Schiff-base intermediate with substrate is the Lys-200. 2 residues coordinate 5-aminolevulinate: Arg-210 and Lys-222. Glu-238 contacts Mg(2+). The active-site Schiff-base intermediate with substrate is Lys-253. 5-aminolevulinate is bound by residues Ser-279 and Tyr-318.

Belongs to the ALAD family. Homooctamer.

It catalyses the reaction 2 5-aminolevulinate = porphobilinogen + 2 H2O + H(+). It participates in porphyrin-containing compound metabolism; protoporphyrin-IX biosynthesis; coproporphyrinogen-III from 5-aminolevulinate: step 1/4. With respect to regulation, stimulated by magnesium, inhibited by zinc. Catalyzes an early step in the biosynthesis of tetrapyrroles. Binds two molecules of 5-aminolevulinate per subunit, each at a distinct site, and catalyzes their condensation to form porphobilinogen. This chain is Delta-aminolevulinic acid dehydratase (hemB), found in Chlorobaculum tepidum (strain ATCC 49652 / DSM 12025 / NBRC 103806 / TLS) (Chlorobium tepidum).